Here is a 264-residue protein sequence, read N- to C-terminus: 1-(5-phosphoribosyl)-5-[(5-phosphoribosylamino)methylideneamino] imidazole-4-carboxamide isomerase (264 aa).

Belongs to the HisA/HisF family.

It is found in the cytoplasm. It catalyses the reaction 1-(5-phospho-beta-D-ribosyl)-5-[(5-phospho-beta-D-ribosylamino)methylideneamino]imidazole-4-carboxamide = 5-[(5-phospho-1-deoxy-D-ribulos-1-ylimino)methylamino]-1-(5-phospho-beta-D-ribosyl)imidazole-4-carboxamide. Its pathway is amino-acid biosynthesis; L-histidine biosynthesis; L-histidine from 5-phospho-alpha-D-ribose 1-diphosphate: step 4/9. The protein is 1-(5-phosphoribosyl)-5-[(5-phosphoribosylamino)methylideneamino] imidazole-4-carboxamide isomerase (HIS6) of Yarrowia lipolytica (strain CLIB 122 / E 150) (Yeast).